Here is a 562-residue protein sequence, read N- to C-terminus: MSNSKEIPSFRWTQSLRRELSSFTIPVKSDVLKDAKMIADGLDFSQVALVQRVLRKTKRTDGDLDKLRDLNREVDNLMAMKSAQKNTILKLGDLNKSELMDLASDLEKLKKKVGQTERSPVGGVYLGNLSQSQLSKRTDLLRRLGFQQPQVRSTGVVRIWDVADPTRLNNQFGSVPALTIACMTVQGGDTMGNVVQALTSLGLLYTVKFPNLADLEKLAAEHDCLQIITKDESAINISGYNFSLSAAVKAGATFLDGGNMLETIKVTPDNFSTIIKTVLGVKKRENMFIDERPGNRNPYENLLYKLCLSGEGWPYIGSRSQVKGRSWENTTVDLSLKPTQGPKAPEKVGLNVRLSHLTEIQESVVREAMSKINPSHTTWIDIEGTSNDPVELALYQPESGNYILCYRKPHDEKGFKNGSRHSHGMLLKDLESAQPGLLSYIIGLLPQDMVLTAQGSDDIKRLLDTHGRKDLKVVDVKLSSDQARNYEEQVWSDFGHLCKKHNGVVVPKKKKDKDPSQSTEPHCALLDCLMFQSVIDGQPPQIKLQSLLPEVLLFTMKPAFAI.

Residues 54–237 (LRKTKRTDGD…ITKDESAINI (184 aa)) form a binding site for the cap structure m7GTP region. Mn(2+)-binding residues include Asp-381 and Glu-383. Positions 391, 498, 501, and 523 each coordinate Zn(2+). Asp-527 provides a ligand contact to Mn(2+).

It belongs to the arenaviridae nucleocapsid protein family. In terms of assembly, homomultimerizes to form the nucleocapsid. Binds to viral genomic RNA. Interacts with glycoprotein G2. Interacts with protein Z; this interaction probably directs the encapsidated genome to budding sites. Interacts with protein L; this interaction does not interfere with Z-L interaction. Interacts with host IKBKE (via Protein kinase domain); the interaction inhibits IKBKE kinase activity.

The protein resides in the virion. The protein localises to the host cytoplasm. Functionally, encapsidates the genome, protecting it from nucleases. The encapsidated genomic RNA is termed the nucleocapsid (NC). Serves as template for viral transcription and replication. The increased presence of protein N in host cell does not seem to trigger the switch from transcription to replication as observed in other negative strain RNA viruses. Through the interaction with host IKBKE, strongly inhibits the phosphorylation and nuclear translocation of host IRF3, a protein involved in interferon activation pathway, leading to the inhibition of interferon-beta and IRF3-dependent promoters activation. Also encodes a functional 3'-5' exoribonuclease that degrades preferentially dsRNA substrates and thereby participates in the suppression of interferon induction. This Homo sapiens (Human) protein is Nucleoprotein.